Consider the following 270-residue polypeptide: MQSSRGARAADVPVRLVVDIGNTSTTLAIFTGDEEPSVESVPSALFADSSTMREVFGNMARKHGEPQAIAICSVVPSATAVGSALLESLFSVPVLTICCKLRFPFRLDYATPHTFGADRLALCAWSRHLFSEKPVIAVDIGTAITFDVLDTVGNYRGGLIMPGIDMMAGALHSRTAQLPQVRIDRPESLLGRSTTECIKSGVFWGVVKQIGGLVDAIRGDLVRDFGESTVEVIVTGGNSRIIVPEIGPVSVIDELAVLRGSDLLLRMNMP.

19-26 (DIGNTSTT) lines the ATP pocket. Residues Tyr109 and 116–119 (GADR) contribute to the substrate site. The active-site Proton acceptor is Asp118. Asp139 serves as a coordination point for K(+). Residue Thr142 participates in ATP binding. Thr194 contributes to the substrate binding site.

The protein belongs to the type III pantothenate kinase family. Homodimer. The cofactor is NH4(+). K(+) serves as cofactor.

It localises to the cytoplasm. The enzyme catalyses (R)-pantothenate + ATP = (R)-4'-phosphopantothenate + ADP + H(+). Its pathway is cofactor biosynthesis; coenzyme A biosynthesis; CoA from (R)-pantothenate: step 1/5. Catalyzes the phosphorylation of pantothenate (Pan), the first step in CoA biosynthesis. The protein is Type III pantothenate kinase of Chlorobaculum tepidum (strain ATCC 49652 / DSM 12025 / NBRC 103806 / TLS) (Chlorobium tepidum).